The chain runs to 163 residues: Nucleotide-binding protein KPN78578_03700 (163 aa).

The protein belongs to the YajQ family.

Functionally, nucleotide-binding protein. The polypeptide is Nucleotide-binding protein KPN78578_03700 (Klebsiella pneumoniae subsp. pneumoniae (strain ATCC 700721 / MGH 78578)).